A 49-amino-acid polypeptide reads, in one-letter code: IgW transmembrane form Tm2T7/Tm7T7/Tm3T3 (49 aa).

N3 carries an N-linked (GlcNAc...) asparagine glycan. The chain crosses the membrane as a helical span at residues 25-45 (VAAFAILFILSFLYSTFVTVV).

As to expression, expressed in the spleen. May also be expressed in other lymphoid tissues.

The protein resides in the membrane. The sequence is that of IgW transmembrane form Tm2T7/Tm7T7/Tm3T3 from Heterodontus francisci (Horn shark).